We begin with the raw amino-acid sequence, 312 residues long: Cytochrome f (312 aa).

An N-terminal signal peptide occupies residues Met-1–Ala-30. Residues Tyr-31, Cys-51, Cys-54, and His-55 each contribute to the heme site. The chain crosses the membrane as a helical span at residues Val-278 to Lys-298.

This sequence belongs to the cytochrome f family. As to quaternary structure, the 4 large subunits of the cytochrome b6-f complex are cytochrome b6, subunit IV (17 kDa polypeptide, petD), cytochrome f and the Rieske protein, while the 4 small subunits are PetG, PetL, PetM and PetN. The complex functions as a dimer. Heme is required as a cofactor.

It is found in the plastid. It localises to the chloroplast thylakoid membrane. In terms of biological role, component of the cytochrome b6-f complex, which mediates electron transfer between photosystem II (PSII) and photosystem I (PSI), cyclic electron flow around PSI, and state transitions. The sequence is that of Cytochrome f (petA) from Bigelowiella natans (Pedinomonas minutissima).